The chain runs to 138 residues: Large ribosomal subunit protein uL16 (138 aa).

Basic residues predominate over residues 1-15 (MLSPKKVKYRKKQRG). The tract at residues 1–21 (MLSPKKVKYRKKQRGRLSGEA) is disordered.

The protein belongs to the universal ribosomal protein uL16 family. Part of the 50S ribosomal subunit.

Functionally, binds 23S rRNA and is also seen to make contacts with the A and possibly P site tRNAs. The sequence is that of Large ribosomal subunit protein uL16 from Borreliella burgdorferi (strain ATCC 35210 / DSM 4680 / CIP 102532 / B31) (Borrelia burgdorferi).